The chain runs to 355 residues: tRNA-specific 2-thiouridylase MnmA (355 aa).

ATP is bound by residues 6-13 and Leu-33; that span reads LLSGGVDS. Cys-100 serves as the catalytic Nucleophile. A disulfide bridge connects residues Cys-100 and Cys-195. Gly-123 lines the ATP pocket. Positions 145–147 are interaction with tRNA; the sequence is KDQ. Cys-195 acts as the Cysteine persulfide intermediate in catalysis.

This sequence belongs to the MnmA/TRMU family.

It is found in the cytoplasm. It carries out the reaction S-sulfanyl-L-cysteinyl-[protein] + uridine(34) in tRNA + AH2 + ATP = 2-thiouridine(34) in tRNA + L-cysteinyl-[protein] + A + AMP + diphosphate + H(+). Functionally, catalyzes the 2-thiolation of uridine at the wobble position (U34) of tRNA, leading to the formation of s(2)U34. The sequence is that of tRNA-specific 2-thiouridylase MnmA from Borrelia garinii subsp. bavariensis (strain ATCC BAA-2496 / DSM 23469 / PBi) (Borreliella bavariensis).